The following is a 165-amino-acid chain: Large ribosomal subunit protein uL10 (165 aa).

Belongs to the universal ribosomal protein uL10 family. Part of the ribosomal stalk of the 50S ribosomal subunit. The N-terminus interacts with L11 and the large rRNA to form the base of the stalk. The C-terminus forms an elongated spine to which L12 dimers bind in a sequential fashion forming a multimeric L10(L12)X complex.

In terms of biological role, forms part of the ribosomal stalk, playing a central role in the interaction of the ribosome with GTP-bound translation factors. The sequence is that of Large ribosomal subunit protein uL10 from Paraburkholderia phymatum (strain DSM 17167 / CIP 108236 / LMG 21445 / STM815) (Burkholderia phymatum).